Consider the following 311-residue polypeptide: Aspartate carbamoyltransferase catalytic subunit (311 aa).

Carbamoyl phosphate-binding residues include arginine 58 and threonine 59. Residue lysine 86 participates in L-aspartate binding. The carbamoyl phosphate site is built by arginine 108, histidine 136, and glutamine 139. Residues arginine 169 and arginine 223 each coordinate L-aspartate. 2 residues coordinate carbamoyl phosphate: glycine 264 and proline 265.

This sequence belongs to the aspartate/ornithine carbamoyltransferase superfamily. ATCase family. In terms of assembly, heterododecamer (2C3:3R2) of six catalytic PyrB chains organized as two trimers (C3), and six regulatory PyrI chains organized as three dimers (R2).

The enzyme catalyses carbamoyl phosphate + L-aspartate = N-carbamoyl-L-aspartate + phosphate + H(+). Its pathway is pyrimidine metabolism; UMP biosynthesis via de novo pathway; (S)-dihydroorotate from bicarbonate: step 2/3. In terms of biological role, catalyzes the condensation of carbamoyl phosphate and aspartate to form carbamoyl aspartate and inorganic phosphate, the committed step in the de novo pyrimidine nucleotide biosynthesis pathway. This Ruegeria pomeroyi (strain ATCC 700808 / DSM 15171 / DSS-3) (Silicibacter pomeroyi) protein is Aspartate carbamoyltransferase catalytic subunit.